The sequence spans 702 residues: Ribosomal RNA large subunit methyltransferase K/L (702 aa).

The 112-residue stretch at 43–154 folds into the THUMP domain; the sequence is LIYQSLMWSR…KETASIALDL (112 aa).

It belongs to the methyltransferase superfamily. RlmKL family.

Its subcellular location is the cytoplasm. It catalyses the reaction guanosine(2445) in 23S rRNA + S-adenosyl-L-methionine = N(2)-methylguanosine(2445) in 23S rRNA + S-adenosyl-L-homocysteine + H(+). The catalysed reaction is guanosine(2069) in 23S rRNA + S-adenosyl-L-methionine = N(2)-methylguanosine(2069) in 23S rRNA + S-adenosyl-L-homocysteine + H(+). Its function is as follows. Specifically methylates the guanine in position 2445 (m2G2445) and the guanine in position 2069 (m7G2069) of 23S rRNA. In Salmonella typhi, this protein is Ribosomal RNA large subunit methyltransferase K/L.